Reading from the N-terminus, the 1097-residue chain is U3 small nucleolar RNA-associated protein 22 (1097 aa).

Composition is skewed to basic and acidic residues over residues 1 to 10 (MNGLKREHES) and 18 to 27 (KTPETEYDSH). The disordered stretch occupies residues 1–27 (MNGLKREHESSSSQDGSKTPETEYDSH).

The protein belongs to the NRAP family. Component of the ribosomal small subunit (SSU) processome.

The protein resides in the nucleus. It localises to the nucleolus. In terms of biological role, involved in nucleolar processing of pre-18S ribosomal RNA and ribosome assembly. This is U3 small nucleolar RNA-associated protein 22 from Schizosaccharomyces pombe (strain 972 / ATCC 24843) (Fission yeast).